Consider the following 335-residue polypeptide: Vitamin B12 import system permease protein BtuC (335 aa).

A run of 9 helical transmembrane segments spans residues 25–45, 67–87, 95–114, 118–140, 153–173, 200–220, 243–263, 286–306, and 308–328; these read LVVI…IWLW, LAVL…QALF, GLLG…VLLG, LPIW…LLLG, LLVG…AVYF, LVLA…VLNF, VLAI…ISFI, CALA…IALF, and AELP…IWLL.

It belongs to the binding-protein-dependent transport system permease family. FecCD subfamily. As to quaternary structure, the complex is composed of two ATP-binding proteins (BtuD), two transmembrane proteins (BtuC) and a solute-binding protein (BtuF).

It localises to the cell inner membrane. Part of the ABC transporter complex BtuCDF involved in vitamin B12 import. Involved in the translocation of the substrate across the membrane. The protein is Vitamin B12 import system permease protein BtuC of Yersinia enterocolitica serotype O:8 / biotype 1B (strain NCTC 13174 / 8081).